The primary structure comprises 160 residues: Cyclic pyranopterin monophosphate synthase (160 aa).

Residues 73–75 (LCH) and 110–111 (ME) each bind substrate. Asp-125 is an active-site residue.

The protein belongs to the MoaC family. As to quaternary structure, homohexamer; trimer of dimers.

It carries out the reaction (8S)-3',8-cyclo-7,8-dihydroguanosine 5'-triphosphate = cyclic pyranopterin phosphate + diphosphate. It functions in the pathway cofactor biosynthesis; molybdopterin biosynthesis. Catalyzes the conversion of (8S)-3',8-cyclo-7,8-dihydroguanosine 5'-triphosphate to cyclic pyranopterin monophosphate (cPMP). The chain is Cyclic pyranopterin monophosphate synthase from Pseudomonas aeruginosa (strain LESB58).